Reading from the N-terminus, the 212-residue chain is Peptide methionine sulfoxide reductase MsrA (212 aa).

Cysteine 52 is a catalytic residue.

The protein belongs to the MsrA Met sulfoxide reductase family.

The enzyme catalyses L-methionyl-[protein] + [thioredoxin]-disulfide + H2O = L-methionyl-(S)-S-oxide-[protein] + [thioredoxin]-dithiol. The catalysed reaction is [thioredoxin]-disulfide + L-methionine + H2O = L-methionine (S)-S-oxide + [thioredoxin]-dithiol. Has an important function as a repair enzyme for proteins that have been inactivated by oxidation. Catalyzes the reversible oxidation-reduction of methionine sulfoxide in proteins to methionine. In Shigella dysenteriae serotype 1 (strain Sd197), this protein is Peptide methionine sulfoxide reductase MsrA.